A 1128-amino-acid chain; its full sequence is Scavenger receptor cysteine-rich domain superfamily protein (1128 aa).

The first 24 residues, 1–24 (MTSLRRGNICWVAVCAALLTLTRG), serve as a signal peptide directing secretion. Over 25–1051 (IDVIAKPSRT…VGAQAGPAGG (1027 aa)) the chain is Extracellular. 9 consecutive SRCR domains span residues 40-140 (VQLV…VVCN), 143-245 (VRLA…VICT), 248-348 (IRLV…VICT), 351-450 (VRLV…AKCQ), 453-553 (VQLV…VVCR), 555-654 (IRLA…VVCR), 657-757 (LRLA…VVCT), 759-866 (LRLT…VLCK), and 868-968 (IRLV…VQCK). Disulfide bonds link cysteine 65-cysteine 129, cysteine 78-cysteine 139, cysteine 109-cysteine 119, cysteine 168-cysteine 234, cysteine 181-cysteine 244, cysteine 212-cysteine 222, cysteine 273-cysteine 337, cysteine 286-cysteine 347, cysteine 316-cysteine 326, cysteine 376-cysteine 439, cysteine 389-cysteine 449, cysteine 419-cysteine 429, cysteine 478-cysteine 542, cysteine 491-cysteine 552, cysteine 522-cysteine 532, cysteine 583-cysteine 644, cysteine 596-cysteine 653, cysteine 624-cysteine 634, cysteine 682-cysteine 746, cysteine 695-cysteine 756, and cysteine 726-cysteine 736. The N-linked (GlcNAc...) asparagine glycan is linked to asparagine 87. 2 N-linked (GlcNAc...) asparagine glycosylation sites follow: asparagine 190 and asparagine 194. N-linked (GlcNAc...) asparagine glycosylation is present at asparagine 229. The N-linked (GlcNAc...) asparagine glycan is linked to asparagine 422. N-linked (GlcNAc...) asparagine glycosylation is found at asparagine 601 and asparagine 612. N-linked (GlcNAc...) asparagine glycosylation is found at asparagine 765, asparagine 808, asparagine 834, and asparagine 936. 6 disulfide bridges follow: cysteine 803/cysteine 865, cysteine 833/cysteine 843, cysteine 906/cysteine 967, cysteine 937/cysteine 947, cysteine 971/cysteine 1013, and cysteine 999/cysteine 1026. Residues 969-1028 (AGCDWPGPIRHGSFSPNRSSYDPLTTIDVKCDAGYELMGSKTLQCVTGCDWSRPTPECQR) enclose the Sushi domain. The N-linked (GlcNAc...) asparagine glycan is linked to asparagine 985. An N-linked (GlcNAc...) asparagine glycan is attached at asparagine 1031. A helical membrane pass occupies residues 1052–1072 (VMLIIGIILGAVVMMLIACVA). Over 1073-1128 (LYLKGRNKNIGRGNPATTSAIWKPKKEFDELKEPVLSFSAMTAGGAGPEDGMGEDI) the chain is Cytoplasmic.

As to expression, from the mid-gastrula stage, expressed only in mesenchyme cells that are migrating toward the body wall. At the brachiolaria stage, expressed in presumptive coelomocytes of the coelomic pouch. Also expressed in adult coelomocytes (at protein level).

Its subcellular location is the cytoplasmic vesicle membrane. Involved in aggregate formation and phagocytosis by larval mesenchyme cells and adult coelomocytes. Binds to bacteria and may act as an opsonin in the innate immune system. The sequence is that of Scavenger receptor cysteine-rich domain superfamily protein from Patiria pectinifera (Starfish).